The chain runs to 247 residues: ATP synthase subunit a, chloroplastic (247 aa).

Helical transmembrane passes span 38 to 58 (QVLI…TVAV), 95 to 115 (VPFI…GALL), 134 to 154 (INTT…AGLT), 199 to 219 (LVVV…VMFL), and 220 to 240 (GLFT…AYIG).

The protein belongs to the ATPase A chain family. In terms of assembly, F-type ATPases have 2 components, CF(1) - the catalytic core - and CF(0) - the membrane proton channel. CF(1) has five subunits: alpha(3), beta(3), gamma(1), delta(1), epsilon(1). CF(0) has four main subunits: a, b, b' and c.

It is found in the plastid. Its subcellular location is the chloroplast thylakoid membrane. Its function is as follows. Key component of the proton channel; it plays a direct role in the translocation of protons across the membrane. This is ATP synthase subunit a, chloroplastic from Acorus calamus var. americanus (American sweet flag).